A 289-amino-acid chain; its full sequence is 5'-3' exonuclease (289 aa).

The 5'-3' exonuclease domain maps to 166 to 256; the sequence is VEPQKIPDYL…EEDLKIKRPD (91 aa).

Its function is as follows. 5'-3' exonuclease acting preferentially on double-stranded DNA. The sequence is that of 5'-3' exonuclease from Aquifex aeolicus (strain VF5).